The following is a 300-amino-acid chain: Acetyl-coenzyme A carboxylase carboxyl transferase subunit beta 1 (300 aa).

Positions 26–294 constitute a CoA carboxyltransferase N-terminal domain; that stretch reads MWVKCPSCGD…HTSAAQHVPA (269 aa). Positions 30, 33, 49, and 51 each coordinate Zn(2+). A C4-type zinc finger spans residues 30–51; sequence CPSCGDLIYTRQFSDNLKVCKC.

This sequence belongs to the AccD/PCCB family. In terms of assembly, acetyl-CoA carboxylase is a heterohexamer composed of biotin carboxyl carrier protein (AccB), biotin carboxylase (AccC) and two subunits each of ACCase subunit alpha (AccA) and ACCase subunit beta (AccD). It depends on Zn(2+) as a cofactor.

It is found in the cytoplasm. The enzyme catalyses N(6)-carboxybiotinyl-L-lysyl-[protein] + acetyl-CoA = N(6)-biotinyl-L-lysyl-[protein] + malonyl-CoA. The protein operates within lipid metabolism; malonyl-CoA biosynthesis; malonyl-CoA from acetyl-CoA: step 1/1. Functionally, component of the acetyl coenzyme A carboxylase (ACC) complex. Biotin carboxylase (BC) catalyzes the carboxylation of biotin on its carrier protein (BCCP) and then the CO(2) group is transferred by the transcarboxylase to acetyl-CoA to form malonyl-CoA. In Roseiflexus sp. (strain RS-1), this protein is Acetyl-coenzyme A carboxylase carboxyl transferase subunit beta 1.